Consider the following 25-residue polypeptide: Dermaseptin-DI5 (25 aa).

It belongs to the frog skin active peptide (FSAP) family. Dermaseptin subfamily. In terms of tissue distribution, expressed by the skin glands.

Its subcellular location is the secreted. Functionally, antibacterial peptide with activity against Gram-positive bacteria S.aureus and E.faecalis, and Gram-negative bacteria P.aeruginosa and E.coli. This chain is Dermaseptin-DI5, found in Phyllomedusa distincta (Monkey frog).